A 275-amino-acid polypeptide reads, in one-letter code: Formamidopyrimidine-DNA glycosylase (275 aa).

The active-site Schiff-base intermediate with DNA is the Pro-2. Glu-3 acts as the Proton donor in catalysis. Lys-59 functions as the Proton donor; for beta-elimination activity in the catalytic mechanism. Positions 93, 112, and 153 each coordinate DNA. Residues 238-272 form an FPG-type zinc finger; the sequence is NVYDRVGKPCPRCQTAIERIVVAQRSTFFCPLCQV. Catalysis depends on Arg-262, which acts as the Proton donor; for delta-elimination activity.

Belongs to the FPG family. In terms of assembly, monomer. Requires Zn(2+) as cofactor.

It catalyses the reaction Hydrolysis of DNA containing ring-opened 7-methylguanine residues, releasing 2,6-diamino-4-hydroxy-5-(N-methyl)formamidopyrimidine.. It carries out the reaction 2'-deoxyribonucleotide-(2'-deoxyribose 5'-phosphate)-2'-deoxyribonucleotide-DNA = a 3'-end 2'-deoxyribonucleotide-(2,3-dehydro-2,3-deoxyribose 5'-phosphate)-DNA + a 5'-end 5'-phospho-2'-deoxyribonucleoside-DNA + H(+). Its function is as follows. Involved in base excision repair of DNA damaged by oxidation or by mutagenic agents. Acts as a DNA glycosylase that recognizes and removes damaged bases. Has a preference for oxidized purines, such as 7,8-dihydro-8-oxoguanine (8-oxoG). Has AP (apurinic/apyrimidinic) lyase activity and introduces nicks in the DNA strand. Cleaves the DNA backbone by beta-delta elimination to generate a single-strand break at the site of the removed base with both 3'- and 5'-phosphates. The polypeptide is Formamidopyrimidine-DNA glycosylase (Chloroflexus aggregans (strain MD-66 / DSM 9485)).